The primary structure comprises 182 residues: Putative colanic acid biosynthesis acetyltransferase WcaF (182 aa).

It belongs to the transferase hexapeptide repeat family.

It participates in slime biogenesis; slime polysaccharide biosynthesis. The sequence is that of Putative colanic acid biosynthesis acetyltransferase WcaF (wcaF) from Shigella flexneri.